The sequence spans 59 residues: MAVQQNRKTRSKRGMRRSHDALSAAALSTDATTGEVHRRHHVSPDGFYRGKQVVEARDE.

The tract at residues 1–59 is disordered; the sequence is MAVQQNRKTRSKRGMRRSHDALSAAALSTDATTGEVHRRHHVSPDGFYRGKQVVEARDE. The span at 7–16 shows a compositional bias: basic residues; the sequence is RKTRSKRGMR. Residues 21–33 are compositionally biased toward low complexity; the sequence is ALSAAALSTDATT.

The protein belongs to the bacterial ribosomal protein bL32 family.

This chain is Large ribosomal subunit protein bL32, found in Marinobacter nauticus (strain ATCC 700491 / DSM 11845 / VT8) (Marinobacter aquaeolei).